A 163-amino-acid chain; its full sequence is NADH-quinone oxidoreductase subunit 9 (163 aa).

4Fe-4S ferredoxin-type domains are found at residues 54–84 (LRRY…IDAE) and 94–123 (TRYD…EGPN). Residues C64, C67, C70, C74, C103, C106, C109, and C113 each contribute to the [4Fe-4S] cluster site.

It belongs to the complex I 23 kDa subunit family. NDH-1 is composed of at least 14 different subunits, Nqo1 to Nqo14. The complex has a L-shaped structure, with the hydrophobic arm (subunits Nqo7, Nqo8, Nqo10 to Nqo14) embedded in the inner membrane and the hydrophilic peripheral arm (subunits Nqo1 to Nqo6, Nqo9) protruding into the bacterial cytoplasm. The hydrophilic domain contains all the redox centers. [4Fe-4S] cluster is required as a cofactor.

The protein resides in the cell inner membrane. The catalysed reaction is a quinone + NADH + 5 H(+)(in) = a quinol + NAD(+) + 4 H(+)(out). Functionally, NDH-1 shuttles electrons from NADH, via FMN and iron-sulfur (Fe-S) centers, to quinones in the respiratory chain. The immediate electron acceptor for the enzyme in this species is believed to be ubiquinone. Couples the redox reaction to proton translocation (for every two electrons transferred, four hydrogen ions are translocated across the cytoplasmic membrane), and thus conserves the redox energy in a proton gradient. The protein is NADH-quinone oxidoreductase subunit 9 of Paracoccus denitrificans.